The following is a 256-amino-acid chain: Phosphatidylglycerol--prolipoprotein diacylglyceryl transferase (256 aa).

Helical transmembrane passes span 19–39 (VHWYGLMYLIGFIGAWLLGYW), 56–76 (LIFYSALGVILGGRVGYMLFY), and 91–111 (IWEGGMSFHGGLLGVVIAAWL). Arginine 139 provides a ligand contact to a 1,2-diacyl-sn-glycero-3-phospho-(1'-sn-glycerol). The chain crosses the membrane as a helical span at residues 231-251 (FGWLTMGQVLSIPMLLIGIWL).

It belongs to the Lgt family.

The protein resides in the cell inner membrane. The catalysed reaction is L-cysteinyl-[prolipoprotein] + a 1,2-diacyl-sn-glycero-3-phospho-(1'-sn-glycerol) = an S-1,2-diacyl-sn-glyceryl-L-cysteinyl-[prolipoprotein] + sn-glycerol 1-phosphate + H(+). Its pathway is protein modification; lipoprotein biosynthesis (diacylglyceryl transfer). In terms of biological role, catalyzes the transfer of the diacylglyceryl group from phosphatidylglycerol to the sulfhydryl group of the N-terminal cysteine of a prolipoprotein, the first step in the formation of mature lipoproteins. This Legionella pneumophila (strain Corby) protein is Phosphatidylglycerol--prolipoprotein diacylglyceryl transferase.